A 145-amino-acid chain; its full sequence is Deoxyuridine 5'-triphosphate nucleotidohydrolase (145 aa).

Substrate is bound by residues 62 to 64 (RSG), N75, 79 to 81 (TVD), and K89.

The protein belongs to the dUTPase family. The cofactor is Mg(2+).

It carries out the reaction dUTP + H2O = dUMP + diphosphate + H(+). The protein operates within pyrimidine metabolism; dUMP biosynthesis; dUMP from dCTP (dUTP route): step 2/2. Its function is as follows. This enzyme is involved in nucleotide metabolism: it produces dUMP, the immediate precursor of thymidine nucleotides and it decreases the intracellular concentration of dUTP so that uracil cannot be incorporated into DNA. The sequence is that of Deoxyuridine 5'-triphosphate nucleotidohydrolase from Helicobacter pylori (strain P12).